The sequence spans 235 residues: Large ribosomal subunit protein uL1 (235 aa).

Belongs to the universal ribosomal protein uL1 family. As to quaternary structure, part of the 50S ribosomal subunit.

Its function is as follows. Binds directly to 23S rRNA. The L1 stalk is quite mobile in the ribosome, and is involved in E site tRNA release. Protein L1 is also a translational repressor protein, it controls the translation of the L11 operon by binding to its mRNA. The chain is Large ribosomal subunit protein uL1 from Methylobacterium sp. (strain 4-46).